The sequence spans 376 residues: 26S proteasome non-ATPase regulatory subunit 13 (376 aa).

The region spanning 171–338 is the PCI domain; sequence SYYKDALRFL…KRVHMTWVQP (168 aa).

Component of the 19S proteasome regulatory particle complex. The 26S proteasome consists of a 20S core particle (CP) and two 19S regulatory subunits (RP). The regulatory particle is made of a lid composed of 9 subunits including PSMD13, a base containing 6 ATPases and few additional components.

In terms of biological role, component of the 26S proteasome, a multiprotein complex involved in the ATP-dependent degradation of ubiquitinated proteins. This complex plays a key role in the maintenance of protein homeostasis by removing misfolded or damaged proteins, which could impair cellular functions, and by removing proteins whose functions are no longer required. Therefore, the proteasome participates in numerous cellular processes, including cell cycle progression, apoptosis, or DNA damage repair. In Gallus gallus (Chicken), this protein is 26S proteasome non-ATPase regulatory subunit 13.